We begin with the raw amino-acid sequence, 402 residues long: MTVRVGDPELVLDPYDYDFHEDPYPYYRRLRDEAPLYRNEERNFWAVSRHHDVLQGFRDSTALSNAYGVSLDPSSRTSEAYRVMSMLAMDDPAHLRMRTLVSKGFTPRRIRELEPQVLELARIHLDSALQTESFDFVAEFAGKLPMDVISELIGVPDTDRARIRALADAVLHREDGVADVPPPAMAASIELMRYYADLIAEFRRRPANNLTSALLAAELDGDRLSDQEIMAFLFLMVIAGNETTTKLLANAVYWAAHHPGQLARVFADHSRIPMWVEETLRYDTSSQILARTVAHDLTLYDTTIPEGEVLLLLPGSANRDDRVFDDPDDYRIGREIGCKLVSFGSGAHFCLGAHLARMEARVALGALLRRIRNYEVDDDNVVRVHSSNVRGFAHLPISVQAR.

A heme-binding site is contributed by C350.

The protein belongs to the cytochrome P450 family. Heme is required as a cofactor.

The polypeptide is Putative cytochrome P450 123 (cyp123) (Mycobacterium bovis (strain ATCC BAA-935 / AF2122/97)).